The primary structure comprises 390 residues: uncharacterized protein (390 aa).

This is an uncharacterized protein from Acanthamoeba polyphaga (Amoeba).